Consider the following 2009-residue polypeptide: Rootletin (2009 aa).

2 coiled-coil regions span residues 74–265 (EMAS…VTSD) and 346–438 (ASLH…LRLQ). 5 disordered regions span residues 462–519 (ALSD…CSDS), 575–594 (RDQT…EAQR), 636–665 (ELKR…LERS), 1180–1225 (EAQR…ELRS), and 1448–1501 (GRVS…EAVR). A compositionally biased stretch (polar residues) spans 463-484 (LSDTESGVQLSSSERTADTSDG). 2 coiled-coil regions span residues 550–1058 (LGSV…LLAE) and 1091–1439 (LEME…GLRS). Residues 577-586 (QTAASAQAQE) are compositionally biased toward low complexity. Over residues 656–665 (ARARRELERS) the composition is skewed to basic and acidic residues. 3 positions are modified to phosphoserine: Ser1453, Ser1463, and Ser1469. A Phosphotyrosine modification is found at Tyr1475. Phosphoserine is present on residues Ser1476, Ser1479, Ser1483, Ser1489, and Ser1568. The segment covering 1479–1494 (SQPPSPGLIASPAPPD) has biased composition (pro residues). Coiled coils occupy residues 1498–1697 (EAVR…GTLQ) and 1744–1998 (HLQK…RSSA). The interval 1957–2009 (QVQTERTLEARERAHRQRVSGLEEQVSTLKAQLHQELRRSSASVSLPPGTPEK) is disordered.

This sequence belongs to the rootletin family. In terms of assembly, homomer. Interacts with KLC3, NEK2 and the N-terminus of CEP250. Interacts with CEP44. In terms of processing, phosphorylated by NEK2 which may regulate its association with centrosomes. Highest expression detected in photoreceptor cells of retina. Expressed at lower levels in brain, trachea and kidney. Detected in all major ciliated epithelia. During embryonic development, enriched along the apical domains of neuroepithelium in brain ventricular zone, in primordia of retinal pigment epithelia and in neural retina.

It is found in the cytoplasm. Its subcellular location is the cytoskeleton. It localises to the microtubule organizing center. The protein localises to the centrosome. The protein resides in the centriole. It is found in the cilium basal body. Functionally, major structural component of the ciliary rootlet, a cytoskeletal-like structure in ciliated cells which originates from the basal body at the proximal end of a cilium and extends proximally toward the cell nucleus. Furthermore, is required for the correct positioning of the cilium basal body relative to the cell nucleus, to allow for ciliogenesis. Contributes to centrosome cohesion before mitosis. The polypeptide is Rootletin (Mus musculus (Mouse)).